Consider the following 81-residue polypeptide: Photosystem I iron-sulfur center (81 aa).

4Fe-4S ferredoxin-type domains are found at residues 2–31 (SHSVKVYDTCIGCTQCVRACPCDVLEMVSW) and 39–68 (IASAPRTEDCIGCKRCETACPTDFLSVRVY). 8 residues coordinate [4Fe-4S] cluster: C11, C14, C17, C21, C48, C51, C54, and C58.

In terms of assembly, the eukaryotic PSI reaction center is composed of at least 11 subunits. [4Fe-4S] cluster is required as a cofactor.

The protein localises to the plastid. It localises to the chloroplast thylakoid membrane. The catalysed reaction is reduced [plastocyanin] + hnu + oxidized [2Fe-2S]-[ferredoxin] = oxidized [plastocyanin] + reduced [2Fe-2S]-[ferredoxin]. Its function is as follows. Apoprotein for the two 4Fe-4S centers FA and FB of photosystem I (PSI); essential for photochemical activity. FB is the terminal electron acceptor of PSI, donating electrons to ferredoxin. The C-terminus interacts with PsaA/B/D and helps assemble the protein into the PSI complex. Required for binding of PsaD and PsaE to PSI. PSI is a plastocyanin/cytochrome c6-ferredoxin oxidoreductase, converting photonic excitation into a charge separation, which transfers an electron from the donor P700 chlorophyll pair to the spectroscopically characterized acceptors A0, A1, FX, FA and FB in turn. In Rhodomonas salina (Cryptomonas salina), this protein is Photosystem I iron-sulfur center.